A 119-amino-acid polypeptide reads, in one-letter code: MFSLKRQQGARFEYQARLFLESKGLQFVAANQSFSCGELDLIMRDQDTLVFVEVRQRKNAVFGSAVESVDWKKQKKWLNAASLWLAQQNRSLEDTDCRFDLIAFGKTTQDLEWIINFLD.

It belongs to the UPF0102 family.

This chain is UPF0102 protein PM0647, found in Pasteurella multocida (strain Pm70).